The sequence spans 455 residues: Probable cytosolic iron-sulfur protein assembly protein 1 (455 aa).

WD repeat units follow at residues 31 to 70, 90 to 129, 163 to 202, 208 to 247, 253 to 292, 318 to 365, and 380 to 453; these read GHSSRAWHLAWNPRMPILASCSGDKDVRLHAYSFVSTTSA, GHQRTVRQVAWSPDGKILATASFDSTVGIWERIQDIDGSS, GHESECKSVAFSYTGGVLASCSRDKSVWIWEVQPDAEFEC, EHSQDVKVVAWHPNDEVLASASYDDAIKLYIDDPSDDWFC, GHESTVWSISFSPCGNYLASASDDLTVRIWRRLDADQCEA, YHDR…DEKS, and HASA…YAAT.

This sequence belongs to the WD repeat CIA1 family.

Its function is as follows. Essential component of the cytosolic iron-sulfur (Fe/S) protein assembly machinery. Required for the maturation of extramitochondrial Fe/S proteins. The polypeptide is Probable cytosolic iron-sulfur protein assembly protein 1 (Mycosarcoma maydis (Corn smut fungus)).